The primary structure comprises 102 residues: Cytochrome b (102 aa).

The next 3 membrane-spanning stretches (helical) occupy residues 1-21 (FGSL…FLAM), 45-66 (WLIR…YMHI), and 81-101 (WNIG…GYVF). The heme b site is built by H51 and H65.

It belongs to the cytochrome b family. In terms of assembly, the cytochrome bc1 complex contains 3 respiratory subunits (MT-CYB, CYC1 and UQCRFS1), 2 core proteins (UQCRC1 and UQCRC2) and probably 6 low-molecular weight proteins. It depends on heme b as a cofactor.

The protein localises to the mitochondrion inner membrane. Its function is as follows. Component of the ubiquinol-cytochrome c reductase complex (complex III or cytochrome b-c1 complex) that is part of the mitochondrial respiratory chain. The b-c1 complex mediates electron transfer from ubiquinol to cytochrome c. Contributes to the generation of a proton gradient across the mitochondrial membrane that is then used for ATP synthesis. The sequence is that of Cytochrome b (mt-cyb) from Plethodon yonahlossee (Yonahlossee salamander).